Consider the following 249-residue polypeptide: Low affinity immunoglobulin gamma Fc region receptor III-A (249 aa).

The N-terminal stretch at 1–20 (MWYLLLPTALLLTVSSGVGA) is a signal peptide. Topologically, residues 21-203 (GLQKAVVNLD…SPSSFLPWHQ (183 aa)) are extracellular. Ig-like C2-type domains follow at residues 31-103 (PEWV…QLDV) and 117-188 (FQEG…LQIS). Intrachain disulfides connect C46-C88 and C127-C171. N-linked (GlcNAc...) asparagine glycans are attached at residues N55 and N62. N179 is a glycosylation site (N-linked (GlcNAc...) asparagine). Residues 204-224 (ITFCLLIGLLFAIDTVLYFSV) form a helical membrane-spanning segment. Over 225–249 (QRSLQSSVAVYEEPKLHWSKEPQDK) the chain is Cytoplasmic. The residue at position 235 (Y235) is a Phosphotyrosine.

As to quaternary structure, forms a heterooligomeric complex with ITAM-containing signaling subunits FCER1G. Interacts (via transmembrane domain) with signaling subunits; this interaction is a prerequisite for receptor complex expression on the cell surface and intracellular signal transduction. Binds the Fc region of antigen-complexed IgG. In terms of processing, N-glycosylated. Post-translationally, phosphorylated following receptor ligation.

Its subcellular location is the cell membrane. Receptor for the invariable Fc fragment of immunoglobulin gamma (IgG). Binds with intermediate affinity to both IgG2a and IgG2b. Can bind to IgG2a and IgG2b monomers. Does not display binding to IgG1 or IgG3. Recognizes neutralizing virus-specific IgGs displayed on the cell surface of infected cells and triggers antibody-dependent cellular cytotoxicity (ADCC). Confers protection to lethal influenza virus infection. On splenic dendritic cells, uptakes antigen immune complexes and efficiently divert them into MHC class I and II antigen presentation pathways to provide for superior priming of CD4-positive and CD8-positive T cell immune responses. Mediates neutrophil activation by IgG complexes redundantly with FCGR2A. Plays a role in promoting bone resorption by enhancing osteoclast differentiation following binding to IgG2a. Also acts as a receptor for the Fc region of immunoglobulin epsilon (IgE). Binds with low affinity to both the a and b allotypes of IgE. Has also been shown to bind to IgE allotype a only but not to allotype b. Binds aggregated IgE but not the monomeric form and bound monomeric IgG is readily displaced by IgE complexes. Binding to IgE promotes macrophage-mediated phagocytosis, antigen presentation to T cells, production of pro-inflammatory cytokines and the late phase of cutaneous allergic reactions. Mediates enhanced ADCC in response to afucosylated IgGs. This is Low affinity immunoglobulin gamma Fc region receptor III-A from Rattus norvegicus (Rat).